Consider the following 122-residue polypeptide: Large ribosomal subunit protein uL14 (122 aa).

The protein belongs to the universal ribosomal protein uL14 family. In terms of assembly, part of the 50S ribosomal subunit. Forms a cluster with proteins L3 and L19. In the 70S ribosome, L14 and L19 interact and together make contacts with the 16S rRNA in bridges B5 and B8.

Its function is as follows. Binds to 23S rRNA. Forms part of two intersubunit bridges in the 70S ribosome. The polypeptide is Large ribosomal subunit protein uL14 (Sphingopyxis alaskensis (strain DSM 13593 / LMG 18877 / RB2256) (Sphingomonas alaskensis)).